We begin with the raw amino-acid sequence, 324 residues long: D-alanine--D-alanine ligase (324 aa).

One can recognise an ATP-grasp domain in the interval 121 to 321; it reads NQYLKAFGVR…IKDVMTDIIE (201 aa). An ATP-binding site is contributed by 149–204; the sequence is VEKIGLPCFIKPNLGGSSFGVTKVKTREQIQPAIAKAFSEAEEVMIEAFMGGTELT. Aspartate 275, glutamate 288, and asparagine 290 together coordinate Mg(2+).

The protein belongs to the D-alanine--D-alanine ligase family. The cofactor is Mg(2+). Mn(2+) serves as cofactor.

Its subcellular location is the cytoplasm. It carries out the reaction 2 D-alanine + ATP = D-alanyl-D-alanine + ADP + phosphate + H(+). It participates in cell wall biogenesis; peptidoglycan biosynthesis. Cell wall formation. The polypeptide is D-alanine--D-alanine ligase (Bacteroides fragilis (strain YCH46)).